Consider the following 292-residue polypeptide: Protein LicB (292 aa).

EamA domains are found at residues Ala70–Ile139 and Leu160–Tyr286.

The chain is Protein LicB (licB) from Haemophilus influenzae (strain ATCC 51907 / DSM 11121 / KW20 / Rd).